A 192-amino-acid polypeptide reads, in one-letter code: Adenylate kinase (192 aa).

10–18 (GVPGVGGTT) contacts ATP.

The protein belongs to the archaeal adenylate kinase family. Monomer.

The protein localises to the cytoplasm. The catalysed reaction is AMP + ATP = 2 ADP. This Methanococcus maripaludis (strain C6 / ATCC BAA-1332) protein is Adenylate kinase.